We begin with the raw amino-acid sequence, 350 residues long: Carbamoyl dehydratase HypE (350 aa).

Cys350 bears the S-carbamoylcysteine mark. Residue Cys350 is modified to S-cyanocysteine.

It belongs to the HypE family. In terms of processing, modified by HypF, which adds a carboxamido group to the thiolate of the C-terminal cysteine, yielding a protein-S-carboxamide. The carboxamido group is then dehydrated by HypE itself to yield a protein-thiocyanate.

It carries out the reaction C-terminal S-carboxamide-L-cysteinyl-[HypE protein] + ATP = C-terminal S-cyanate-L-cysteinyl-[HypE protein] + ADP + phosphate + H(+). It participates in protein modification; [NiFe] hydrogenase maturation. In terms of biological role, involved in the maturation of [NiFe] hydrogenases. Along with HypF, it catalyzes the synthesis of the CN ligands of the active site iron of [NiFe]-hydrogenases. HypE catalyzes the ATP-dependent dehydration of the carboxamido group attached to its C-terminal cysteine to a cyano group. The sequence is that of Carbamoyl dehydratase HypE from Rhizobium leguminosarum bv. viciae.